The chain runs to 811 residues: Glycerol-3-phosphate acyltransferase (811 aa).

The HXXXXD motif signature appears at 303 to 308; the sequence is HRSHMD.

This sequence belongs to the GPAT/DAPAT family.

Its subcellular location is the cell inner membrane. It carries out the reaction sn-glycerol 3-phosphate + an acyl-CoA = a 1-acyl-sn-glycero-3-phosphate + CoA. It functions in the pathway phospholipid metabolism; CDP-diacylglycerol biosynthesis; CDP-diacylglycerol from sn-glycerol 3-phosphate: step 1/3. This is Glycerol-3-phosphate acyltransferase from Haemophilus ducreyi (strain 35000HP / ATCC 700724).